Reading from the N-terminus, the 256-residue chain is tRNA pseudouridine synthase A (256 aa).

Residue Asp-52 is the Nucleophile of the active site. A substrate-binding site is contributed by Tyr-111.

It belongs to the tRNA pseudouridine synthase TruA family. Homodimer.

It catalyses the reaction uridine(38/39/40) in tRNA = pseudouridine(38/39/40) in tRNA. Functionally, formation of pseudouridine at positions 38, 39 and 40 in the anticodon stem and loop of transfer RNAs. This chain is tRNA pseudouridine synthase A, found in Paramagnetospirillum magneticum (strain ATCC 700264 / AMB-1) (Magnetospirillum magneticum).